Here is a 2828-residue protein sequence, read N- to C-terminus: Matrix-remodeling-associated protein 5 (2828 aa).

The signal sequence occupies residues 1–26 (MPKRAHWGALSVVLILLWGHPRVALA). The 29-residue stretch at 27 to 55 (CPHPCACYVPSEVHCTFRSLASVPAGIAK) folds into the LRRNT domain. LRR repeat units follow at residues 56–77 (HVERINLGFNSIQALSETSFAG), 80–101 (KLELLMIHGNEIPSIPDGALRD), 104–125 (SLQVFKFSYNKLRVITGQTLQG), 128–149 (NLMRLHIDHNKIEFIHPQAFNG), 152–173 (SLRLLHLEGNLLHQLHPSTFST), and 184–205 (TIRHLYLAENMVRTLPASMLRN). An LRRCT domain is found at 217–277 (NPWTCDCEMR…HKLKDMTCLK (61 aa)). 2 N-linked (GlcNAc...) asparagine glycosylation sites follow: Asn287 and Asn321. 2 consecutive Ig-like C2-type domains span residues 481–571 (PSGA…YRVL) and 575–669 (PSTQ…ITVT). Intrachain disulfides connect Cys501–Cys555 and Cys599–Cys651. Asn633 carries N-linked (GlcNAc...) asparagine glycosylation. 5 disordered regions span residues 671–715 (KGSG…RRLL), 933–962 (KPTHEETATEGWSAADVGSSPEPTSSEYEP), 1068–1190 (QGGN…APDI), 1204–1275 (AWVD…SSET), and 1367–1389 (EESSPVGFPGTPTWNPSRTAQPG). A compositionally biased stretch (acidic residues) spans 695 to 708 (IVEDEGGSGMGDEE). O-linked (Xyl...) (chondroitin sulfate) serine glycosylation is present at Ser702. The span at 951-962 (SSPEPTSSEYEP) shows a compositional bias: low complexity. A compositionally biased stretch (polar residues) spans 1090 to 1107 (SKSITLPDSTLGIMSSMS). Basic residues predominate over residues 1146 to 1168 (PSRRRPNGRRRLRPNKFRHRHKQ). Polar residues-rich tracts occupy residues 1169–1190 (TPPTTFAPSETFSTQPTQAPDI) and 1204–1214 (AWVDNTVNTPK). The segment covering 1229 to 1243 (TPRRKHGKRPNKHRY) has biased composition (basic residues). N-linked (GlcNAc...) asparagine glycosylation occurs at Asn1403. The LRR 7 repeat unit spans residues 1410–1434 (LKELEDVDFTSEFLSSLTVSTPFHQ). Disordered stretches follow at residues 1479-1499 (QNHTPTAARMKEPASSSPSTI), 1536-1566 (NPETEATPVNNEGTQHMSGPNELSTPSSDQD), 1579-1603 (QVFGSRSLPRGPDSQRQDGRVHASH), 1669-1689 (STTIPLPLHMSKPSIPSKFTD), and 1700-1719 (KVFGNNNIPEARNPVGKPPS). Residues 1542-1566 (TPVNNEGTQHMSGPNELSTPSSDQD) show a composition bias toward polar residues. Residue Asn1735 is glycosylated (N-linked (GlcNAc...) asparagine). Ig-like C2-type domains follow at residues 1853 to 1946 (PQIL…LSVT), 1950 to 2041 (PQIL…IRLH), 2046 to 2140 (PPVI…LNVQ), 2146 to 2239 (ARIT…VDVV), 2242 to 2343 (PAKI…KVVT), 2345 to 2432 (PATI…KTVW), 2440 to 2534 (PKIN…LQLT), 2542 to 2630 (PIFH…RLVS), 2637 to 2722 (PEAN…PSVT), and 2733 to 2828 (PRIT…IHVF). Disulfide bonds link Cys1875–Cys1928 and Cys1972–Cys2025. N-linked (GlcNAc...) asparagine glycans are attached at residues Asn2007 and Asn2056. Cystine bridges form between Cys2069/Cys2122, Cys2168/Cys2221, Cys2265/Cys2324, Cys2368/Cys2418, Cys2466/Cys2518, Cys2564/Cys2616, Cys2659/Cys2711, and Cys2755/Cys2810. Asn2693 carries N-linked (GlcNAc...) asparagine glycosylation.

In terms of tissue distribution, detected in placenta (at protein level). Detected in cerebrospinal fluid and fibroblasts (at protein level). Highly expressed in kidney, also detected on liver and spleen. Expressed by proximal tubular cells of the kidney (at protein level). Expression highly increases during chronic kidney disease and autosomal dominant polycystic kidney disease, where is detected in cysts.

It is found in the secreted. Functionally, in kidney, has anti-inflammatory and anti-fibrotic properties by limiting the induction of chemokines, fibronectin and collagen expression in response to TGB1 and pro-inflammatory stimuli. This Homo sapiens (Human) protein is Matrix-remodeling-associated protein 5 (MXRA5).